The chain runs to 395 residues: ATP-dependent RNA helicase eIF4A (395 aa).

The Q motif motif lies at 22–50; that stretch reads TSFDDLGLKDELLRGIYGYGFENPSSIQQ. In terms of domain architecture, Helicase ATP-binding spans 53–223; sequence ILPVIKGNDV…GKFMRDPVRI (171 aa). Residue 66-73 coordinates ATP; the sequence is AQSGTGKT. The short motif at 171 to 174 is the DEAD box element; that stretch reads DEAD. The Helicase C-terminal domain occupies 234–395; sequence GIKQFYIDVE…EMPTNIADLI (162 aa).

Belongs to the DEAD box helicase family. eIF4A subfamily. As to quaternary structure, component of the eIF4F complex, which composition varies with external and internal environmental conditions. It is composed of at least eIF4A, eIF4E and eIF4G.

The protein resides in the cytoplasm. It carries out the reaction ATP + H2O = ADP + phosphate + H(+). In terms of biological role, ATP-dependent RNA helicase which is a subunit of the eIF4F complex involved in cap recognition and is required for mRNA binding to ribosome. In the current model of translation initiation, eIF4A unwinds RNA secondary structures in the 5'-UTR of mRNAs which is necessary to allow efficient binding of the small ribosomal subunit, and subsequent scanning for the initiator codon. The polypeptide is ATP-dependent RNA helicase eIF4A (TIF1) (Yarrowia lipolytica (strain CLIB 122 / E 150) (Yeast)).